A 144-amino-acid chain; its full sequence is Putative sugar phosphate isomerase RBE_0278 (144 aa).

His12 is a substrate binding site. His101 functions as the Proton donor in the catalytic mechanism. A substrate-binding site is contributed by Arg135.

This sequence belongs to the LacAB/RpiB family.

This chain is Putative sugar phosphate isomerase RBE_0278, found in Rickettsia bellii (strain RML369-C).